The following is a 1388-amino-acid chain: MEVLMAERTNLVFHNKVIDGTAIKRLISRLIDHFGMAYTSHILDQVKALGLRRATATSISLGIDDLLTIPSKRWLVQDAEQQSFLLEKNHHYGNVHVVEKLRQSIEVWYATSEYLRQEMNPNFQMTDPSNPVHLMSFSGARGNASQVHQLVGMRGLMSDPQGQMIDLPIQSNLREGLSVTEYIISCYGARKGVVDTAVRTSDAGYLTRRLVEVVQHILVRRTDCGTIRGISVSPQNGMTEKIFVQTLIGRVLADDIYIGLRCIGTRNKDIGIGLVNRFITFQAHPIYIRTPFTCRSTSWICQLCYGRSPTHGDLVELGEAVGIIAGQSIGEPGTQLTLRTFHTGGVFTGGTAEHVRAPSNGKIKFDEGLVHPTRTRHGHPAFLCFIDFYVTIESRDIRHNVNIPTKSLILVQNDQYVESEQVIAEIRAETSTFHFKERVQKHIYSESEGEMHWSTDGYHTPKYPYSNVHLLPKTSHLWILAGGLCRSNSNIVSFSLHKDQDQMNANSFSLKDLFDLSLTNDQVRHKLLDTFGKKDRESLDYSKPYRIISKGHWNLIEPSTYIRQENSLAKKRRNRFVIPLQYDQEQENKLIPCFGISIKIPINGILRRNSIIAYFDDPRYRRSSSGITKYGIVEVDSIVKKEDLIEYRGAKDFSPKYQTQMKVDQFFFIPEEIHILPGSSPIMVRNNSIIGVDTRLVLNINTRSRVGGLVRVERKKKSLELKIFSGDIHFYGEVDKISRHSGILIPPGIGKKDSKGSKKLKNWIYVQRITPTKKKYFVLVRPVVTYEIADGINLATLFSQDLLQEKNNVQLRIVNYILYENGKSIRGISHTSIQLVRACLVLTWDQEKKSSIEEKVHASFVEIRTNDLLCYFIRIELVKSTLSYTEKRYDTAGSGLISNNELDRIHRKNPFDSKAKIQIFPQHQGTLGTLLNRNKECQSFLILSSSNCSRIGPFNTSRYNNATKELDPMTPIRYLLGPLGTIVPRIVNSRSSYYLRTYNQVFLKKSFLLENFQQTFQVLQVPPFQYCFLDENSRIYNPDPCSNIIWNSFHLNWCFLHHDSCEEAWPIISLGQFLCENVYLLKYGSRIKKSGQIFIVHVDSLVIRSAKPYLVTPGATVHGHYGETFYEGDTLITFIYEKSRSGDITQGLPKVEQILEVRSIDSISMNLERRVEGWDERIRRILGIPWGFLIGAELTIAQSRISLVNKIQKVYRSQGVQIHNRHLEIIVRQVTSRVLVSEDGMSNVFLPGEFIGLLRAERAGRVLAESICYRAILLGITKSSLNTQSFISEASFQETARVLAKAALRGRIDWLKGLKENVVLGGIIPVGTGFNKLVHRSKQDKNIHLKIKRKNLFELEMSDILLHHRELFCSCAQELSMRHQTNLLRNVS.

C224, C294, C301, and C304 together coordinate Zn(2+).

The protein belongs to the RNA polymerase beta' chain family. RpoC2 subfamily. As to quaternary structure, in plastids the minimal PEP RNA polymerase catalytic core is composed of four subunits: alpha, beta, beta', and beta''. When a (nuclear-encoded) sigma factor is associated with the core the holoenzyme is formed, which can initiate transcription. Zn(2+) serves as cofactor.

The protein localises to the plastid. Its subcellular location is the chloroplast. The catalysed reaction is RNA(n) + a ribonucleoside 5'-triphosphate = RNA(n+1) + diphosphate. Functionally, DNA-dependent RNA polymerase catalyzes the transcription of DNA into RNA using the four ribonucleoside triphosphates as substrates. The protein is DNA-directed RNA polymerase subunit beta'' of Phalaenopsis aphrodite subsp. formosana (Moth orchid).